We begin with the raw amino-acid sequence, 223 residues long: Deoxyribose-phosphate aldolase (223 aa).

Asp91 serves as the catalytic Proton donor/acceptor. The Schiff-base intermediate with acetaldehyde role is filled by Lys153. Catalysis depends on Lys182, which acts as the Proton donor/acceptor.

The protein belongs to the DeoC/FbaB aldolase family. DeoC type 1 subfamily.

It is found in the cytoplasm. It carries out the reaction 2-deoxy-D-ribose 5-phosphate = D-glyceraldehyde 3-phosphate + acetaldehyde. It participates in carbohydrate degradation; 2-deoxy-D-ribose 1-phosphate degradation; D-glyceraldehyde 3-phosphate and acetaldehyde from 2-deoxy-alpha-D-ribose 1-phosphate: step 2/2. Its function is as follows. Catalyzes a reversible aldol reaction between acetaldehyde and D-glyceraldehyde 3-phosphate to generate 2-deoxy-D-ribose 5-phosphate. In Streptococcus pyogenes serotype M12 (strain MGAS2096), this protein is Deoxyribose-phosphate aldolase.